Reading from the N-terminus, the 278-residue chain is Methyltransferase adrK (278 aa).

Residues 124–125 (DL), 151–152 (DV), and 152–153 (VL) contribute to the S-adenosyl-L-methionine site.

It belongs to the class I-like SAM-binding methyltransferase superfamily. In terms of assembly, homodimer.

It participates in secondary metabolite biosynthesis; terpenoid biosynthesis. Its function is as follows. Methyltransferase; part of the gene cluster that mediates the biosynthesis of andrastins, meroterpenoid compounds that exhibit inhibitory activity against ras farnesyltransferase, suggesting that they could be promising leads for antitumor agents. The first step of the pathway is the synthesis of 3,5-dimethylorsellinic acid (DMOA) by the polyketide synthase adrD via condensation of one acetyl-CoA starter unit with 3 malonyl-CoA units and 2 methylations. DMAO is then converted to farnesyl-DMAO by the prenyltransferase adrG. The methyltransferase adrK catalyzes the methylation of the carboxyl group of farnesyl-DMAO to farnesyl-DMAO methyl ester which is further converted to epoxyfarnesyl-DMAO methyl ester by the FAD-dependent monooxygenase adrH. The terpene cyclase adrI then catalyzes the carbon skeletal rearrangement to generate the andrastin E, the first compound in the pathway having the andrastin scaffold, with the tetracyclic ring system. The post-cyclization tailoring enzymes adrF, adrE, adrJ, and adrA, are involved in the conversion of andrastin E into andrastin A. The short chain dehydrogenase adrF is responsible for the oxidation of the C-3 a hydroxyl group of andrastin E to yield the corresponding ketone, andrastin D. The ketoreductase adrE stereoselectively reduces the carbonyl moiety to reverse the stereochemistry of the C-3 position to yield andrastin F. The acetyltransferase adrJ is the acetyltransferase that attaches the acetyl group to the C-3 hydroxyl group of andrastin F to yield andrastin C. Finally, the cytochrome P450 monooxygenase adrA catalyzes two sequential oxidation reactions of the C-23 methyl group, to generate the corresponding alcohol andrastin B, and aldehyde andrastin A. The polypeptide is Methyltransferase adrK (Penicillium roqueforti).